The primary structure comprises 383 residues: Lipid-A-disaccharide synthase (383 aa).

The protein belongs to the LpxB family.

The enzyme catalyses a lipid X + a UDP-2-N,3-O-bis[(3R)-3-hydroxyacyl]-alpha-D-glucosamine = a lipid A disaccharide + UDP + H(+). The protein operates within bacterial outer membrane biogenesis; LPS lipid A biosynthesis. Functionally, condensation of UDP-2,3-diacylglucosamine and 2,3-diacylglucosamine-1-phosphate to form lipid A disaccharide, a precursor of lipid A, a phosphorylated glycolipid that anchors the lipopolysaccharide to the outer membrane of the cell. This Syntrophus aciditrophicus (strain SB) protein is Lipid-A-disaccharide synthase.